Reading from the N-terminus, the 85-residue chain is Conotoxin Lv15a (85 aa).

An N-terminal signal peptide occupies residues 1–23 (MEKLTVLILVATVLLMIQVLAQS). A propeptide spanning residues 24 to 49 (GGDKHLKRRPKQYATKRLSALMRGHR) is cleaved from the precursor. A Pyrrolidone carboxylic acid modification is found at Gln50.

The protein belongs to the conotoxin O2 superfamily. In terms of processing, contains 4 disulfide bonds. In terms of tissue distribution, expressed by the venom duct.

Its subcellular location is the secreted. This Conus lividus (Livid cone) protein is Conotoxin Lv15a.